The following is a 96-amino-acid chain: Large ribosomal subunit protein uL23 (96 aa).

It belongs to the universal ribosomal protein uL23 family. Part of the 50S ribosomal subunit. Contacts protein L29, and trigger factor when it is bound to the ribosome.

In terms of biological role, one of the early assembly proteins it binds 23S rRNA. One of the proteins that surrounds the polypeptide exit tunnel on the outside of the ribosome. Forms the main docking site for trigger factor binding to the ribosome. This Bacillus cereus (strain ATCC 10987 / NRS 248) protein is Large ribosomal subunit protein uL23.